We begin with the raw amino-acid sequence, 133 residues long: p53 and DNA damage-regulated protein 1 (133 aa).

It belongs to the prefoldin subunit beta family. Component of the PAQosome complex which is responsible for the biogenesis of several protein complexes and which consists of R2TP complex members RUVBL1, RUVBL2, RPAP3 and PIH1D1, URI complex members PFDN2, PFDN6, PDRG1, UXT and URI1 as well as ASDURF, POLR2E and DNAAF10/WDR92.

The protein localises to the cytoplasm. Its function is as follows. May play a role in chaperone-mediated protein folding. The chain is p53 and DNA damage-regulated protein 1 (PDRG1) from Bos taurus (Bovine).